A 382-amino-acid chain; its full sequence is Intermediate transcription factor 3 large subunit (382 aa).

Belongs to the poxviruses A23 family. As to quaternary structure, heterodimer of a 45 kDa and a 32 kDa subunit.

Functionally, acts with RNA polymerase to initiate transcription from intermediate gene promoters. This chain is Intermediate transcription factor 3 large subunit (VITF3L), found in Monkeypox virus (strain Zaire-96-I-16) (MPX).